A 622-amino-acid polypeptide reads, in one-letter code: Chaperone protein HscA homolog (622 aa).

Belongs to the heat shock protein 70 family.

In terms of biological role, chaperone involved in the maturation of iron-sulfur cluster-containing proteins. Has a low intrinsic ATPase activity which is markedly stimulated by HscB. In Burkholderia pseudomallei (strain 668), this protein is Chaperone protein HscA homolog.